A 137-amino-acid chain; its full sequence is Large ribosomal subunit protein uL16 (137 aa).

It belongs to the universal ribosomal protein uL16 family. As to quaternary structure, part of the 50S ribosomal subunit.

Binds 23S rRNA and is also seen to make contacts with the A and possibly P site tRNAs. This is Large ribosomal subunit protein uL16 from Methylocella silvestris (strain DSM 15510 / CIP 108128 / LMG 27833 / NCIMB 13906 / BL2).